Reading from the N-terminus, the 419-residue chain is Hyaluronidase-3 (419 aa).

A signal peptide spans 1 to 16 (MTMQLGLALVLGVAMC). Disulfide bonds link Cys42–Cys331, Cys205–Cys220, Cys356–Cys367, Cys361–Cys395, and Cys397–Cys406. N-linked (GlcNAc...) asparagine glycosylation occurs at Asn69. Glu129 serves as the catalytic Proton donor. The N-linked (GlcNAc...) asparagine glycan is linked to Asn215. An EGF-like domain is found at 352 to 407 (AAMACSHQRCHGHGRCAWQDPGQLKVFLHLHPGGSPGAWESFSCRCYWGWAGPTCQ).

The protein belongs to the glycosyl hydrolase 56 family. In terms of processing, N-glycosylated. In terms of tissue distribution, highly expressed in bladder, spleen and liver. Expressed at low levels in the kidney.

It is found in the secreted. Its subcellular location is the cell membrane. It localises to the cytoplasmic vesicle. The protein localises to the secretory vesicle. The protein resides in the acrosome. It is found in the endoplasmic reticulum. Its subcellular location is the early endosome. The enzyme catalyses Random hydrolysis of (1-&gt;4)-linkages between N-acetyl-beta-D-glucosamine and D-glucuronate residues in hyaluronate.. Functionally, facilitates sperm penetration into the layer of cumulus cells surrounding the egg by digesting hyaluronic acid. Involved in induction of the acrosome reaction in the sperm. Involved in follicular atresia, the breakdown of immature ovarian follicles that are not selected to ovulate. Induces ovarian granulosa cell apoptosis, possibly via apoptotic signaling pathway involving CASP8 and CASP3 activation, and poly(ADP-ribose) polymerase (PARP) cleavage. Has no hyaluronidase activity in embryonic fibroblasts in vitro. Has no hyaluronidase activity in granulosa cells in vitro. The chain is Hyaluronidase-3 (HYAL3) from Sus scrofa (Pig).